Consider the following 285-residue polypeptide: Sulfotransferase 2A1 (285 aa).

3'-phosphoadenylyl sulfate is bound by residues lysine 44, serine 45, glycine 46, threonine 47, asparagine 48, and tryptophan 49. The Proton acceptor role is filled by histidine 99. Arginine 121, serine 129, tyrosine 184, serine 218, methionine 223, arginine 247, lysine 248, and glycine 249 together coordinate 3'-phosphoadenylyl sulfate.

It belongs to the sulfotransferase 1 family. Homodimer. Highly expressed in liver.

Its subcellular location is the cytoplasm. It carries out the reaction an alcohol + 3'-phosphoadenylyl sulfate = an alkyl sulfate + adenosine 3',5'-bisphosphate + H(+). The enzyme catalyses taurolithocholate + 3'-phosphoadenylyl sulfate = taurolithocholate 3-sulfate + adenosine 3',5'-bisphosphate + H(+). It catalyses the reaction pregnenolone + 3'-phosphoadenylyl sulfate = pregnenolone sulfate + adenosine 3',5'-bisphosphate + H(+). The catalysed reaction is 3beta-hydroxyandrost-5-en-17-one + 3'-phosphoadenylyl sulfate = dehydroepiandrosterone 3-sulfate + adenosine 3',5'-bisphosphate + H(+). It carries out the reaction lithocholate + 3'-phosphoadenylyl sulfate = lithocholate sulfate + adenosine 3',5'-bisphosphate + H(+). The enzyme catalyses (24S)-hydroxycholesterol + 3'-phosphoadenylyl sulfate = (24S)-hydroxycholesterol 24-sulfate + adenosine 3',5'-bisphosphate + H(+). It catalyses the reaction (24S)-hydroxycholesterol + 3'-phosphoadenylyl sulfate = (24S)-hydroxycholesterol 3-sulfate + adenosine 3',5'-bisphosphate + H(+). The catalysed reaction is (24S)-hydroxycholesterol 24-sulfate + 3'-phosphoadenylyl sulfate = (24S)-hydroxycholesterol 3,24-disulfate + adenosine 3',5'-bisphosphate + H(+). It carries out the reaction androsterone + 3'-phosphoadenylyl sulfate = androsterone 3alpha-sulfate + adenosine 3',5'-bisphosphate + H(+). Sulfotransferase that utilizes 3'-phospho-5'-adenylyl sulfate (PAPS) as sulfonate donor to catalyze the sulfonation of steroids and bile acids in the liver and adrenal glands. Mediates the sulfation of a wide range of steroids and sterols, including pregnenolone, androsterone, DHEA, bile acids, cholesterol and as well many xenobiotics that contain alcohol and phenol functional groups. Sulfonation increases the water solubility of most compounds, and therefore their renal excretion, but it can also result in bioactivation to form active metabolites. Plays an important role in maintening steroid and lipid homeostasis. Plays a key role in bile acid metabolism. In addition, catalyzes the metabolic activation of potent carcinogenic polycyclic arylmethanols. The sequence is that of Sulfotransferase 2A1 (Sult2a1) from Mus musculus (Mouse).